The chain runs to 103 residues: A-type ATP synthase subunit F (103 aa).

It belongs to the V-ATPase F subunit family. In terms of assembly, has multiple subunits with at least A(3), B(3), C, D, E, F, H, I and proteolipid K(x).

Its subcellular location is the cell membrane. Component of the A-type ATP synthase that produces ATP from ADP in the presence of a proton gradient across the membrane. The polypeptide is A-type ATP synthase subunit F (Pyrococcus abyssi (strain GE5 / Orsay)).